Consider the following 396-residue polypeptide: Bone morphogenetic protein 2 (396 aa).

Positions 1–23 (MVAGTRCLLALLLPQVLLGGAAG) are cleaved as a signal peptide. The propeptide at 24–282 (LIPELGRRKF…GHPLHRREKR (259 aa)) is cleaved by PCSK5. Phosphoserine is present on serine 87. N-linked (GlcNAc...) asparagine glycosylation is found at asparagine 135, asparagine 163, asparagine 164, and asparagine 200. Residues 272-293 (KGHPLHRREKRQAKHKQRKRLK) form a disordered region. The segment covering 274 to 293 (HPLHRREKRQAKHKQRKRLK) has biased composition (basic residues). 3 cysteine pairs are disulfide-bonded: cysteine 296–cysteine 361, cysteine 325–cysteine 393, and cysteine 329–cysteine 395. Asparagine 338 carries an N-linked (GlcNAc...) asparagine glycan.

The protein belongs to the TGF-beta family. In terms of assembly, homodimer; disulfide-linked. Interacts with SOSTDC1. Interacts with GREM2, RGMA, RGMB and RGMC. Interacts with ASPN. Interacts with MAFP5. Interacts with FBN1 (via N-terminal domain) and FBN2. Interacts with type I receptor BMPR1A. Interacts with type II receptor BMPR2. Interacts with ERFE. Interacts with BMPR1A/ALK3; the interaction may induce HAMP expression. Interacts with TGFBR3.

The protein resides in the secreted. Growth factor of the TGF-beta superfamily that plays essential roles in many developmental processes, including cardiogenesis, neurogenesis, and osteogenesis. Induces cartilage and bone formation. Initiates the canonical BMP signaling cascade by associating with type I receptor BMPR1A and type II receptor BMPR2. Once all three components are bound together in a complex at the cell surface, BMPR2 phosphorylates and activates BMPR1A. In turn, BMPR1A propagates signal by phosphorylating SMAD1/5/8 that travel to the nucleus and act as activators and repressors of transcription of target genes. Also acts to promote expression of HAMP, via the interaction with its receptor BMPR1A/ALK3. Can also signal through non-canonical pathways such as ERK/MAP kinase signaling cascade that regulates osteoblast differentiation. Also stimulates the differentiation of myoblasts into osteoblasts via the EIF2AK3-EIF2A-ATF4 pathway by stimulating EIF2A phosphorylation which leads to increased expression of ATF4 which plays a central role in osteoblast differentiation. Acts as a positive regulator of odontoblast differentiation during mesenchymal tooth germ formation, expression is repressed during the bell stage by MSX1-mediated inhibition of CTNNB1 signaling. The polypeptide is Bone morphogenetic protein 2 (BMP2) (Dama dama (Fallow deer)).